The primary structure comprises 375 residues: Phosphoribulokinase, chloroplastic (375 aa).

Residues 1–31 constitute a chloroplast transit peptide; that stretch reads MAFTMRAPAPRATAQSRVTANRARRSLVVRA. Cys-47 and Cys-86 are joined by a disulfide.

This sequence belongs to the phosphoribulokinase family. In terms of assembly, component of a complex that contains two dimers of PRK, two tetramers of GAPDH and CP12.

The protein resides in the plastid. The protein localises to the chloroplast. It carries out the reaction D-ribulose 5-phosphate + ATP = D-ribulose 1,5-bisphosphate + ADP + H(+). Its pathway is carbohydrate biosynthesis; Calvin cycle. Light regulated via thioredoxin by reversible oxidation/reduction of sulfhydryl/disulfide groups. The protein is Phosphoribulokinase, chloroplastic (PRKA) of Chlamydomonas reinhardtii (Chlamydomonas smithii).